We begin with the raw amino-acid sequence, 443 residues long: Xaa-Pro dipeptidase (443 aa).

Mn(2+) is bound by residues D246, D257, H339, E384, and E423.

Belongs to the peptidase M24B family. Bacterial-type prolidase subfamily. Mn(2+) is required as a cofactor.

It carries out the reaction Xaa-L-Pro dipeptide + H2O = an L-alpha-amino acid + L-proline. In terms of biological role, splits dipeptides with a prolyl residue in the C-terminal position. The chain is Xaa-Pro dipeptidase from Citrobacter koseri (strain ATCC BAA-895 / CDC 4225-83 / SGSC4696).